Here is a 151-residue protein sequence, read N- to C-terminus: Flagellar assembly factor FliW (151 aa).

This sequence belongs to the FliW family. In terms of assembly, interacts with translational regulator CsrA and flagellin(s).

The protein resides in the cytoplasm. Functionally, acts as an anti-CsrA protein, binds CsrA and prevents it from repressing translation of its target genes, one of which is flagellin. Binds to flagellin and participates in the assembly of the flagellum. This is Flagellar assembly factor FliW from Lachnospira eligens (strain ATCC 27750 / DSM 3376 / VPI C15-48 / C15-B4) (Eubacterium eligens).